An 83-amino-acid chain; its full sequence is Sec-independent protein translocase protein TatA (83 aa).

A helical membrane pass occupies residues 2-22 (GLGGISIWQLLIVLVIVLLLF). 2 stretches are compositionally biased toward basic and acidic residues: residues 50–65 (AAKQ…KVAA) and 74–83 (AEQKEKTEAK). Residues 50 to 83 (AAKQEAEEAEQKKVAAEEAAAAKTAEQKEKTEAK) form a disordered region.

It belongs to the TatA/E family. In terms of assembly, the Tat system comprises two distinct complexes: a TatABC complex, containing multiple copies of TatA, TatB and TatC subunits, and a separate TatA complex, containing only TatA subunits. Substrates initially bind to the TatABC complex, which probably triggers association of the separate TatA complex to form the active translocon.

The protein resides in the cell inner membrane. Its function is as follows. Part of the twin-arginine translocation (Tat) system that transports large folded proteins containing a characteristic twin-arginine motif in their signal peptide across membranes. TatA could form the protein-conducting channel of the Tat system. This chain is Sec-independent protein translocase protein TatA, found in Saccharophagus degradans (strain 2-40 / ATCC 43961 / DSM 17024).